A 184-amino-acid chain; its full sequence is NADH-quinone oxidoreductase subunit B (184 aa).

[4Fe-4S] cluster-binding residues include Cys37, Cys38, Cys103, and Cys132.

The protein belongs to the complex I 20 kDa subunit family. As to quaternary structure, NDH-1 is composed of 14 different subunits. Subunits NuoB, C, D, E, F, and G constitute the peripheral sector of the complex. It depends on [4Fe-4S] cluster as a cofactor.

It is found in the cell membrane. The catalysed reaction is a quinone + NADH + 5 H(+)(in) = a quinol + NAD(+) + 4 H(+)(out). Its function is as follows. NDH-1 shuttles electrons from NADH, via FMN and iron-sulfur (Fe-S) centers, to quinones in the respiratory chain. The immediate electron acceptor for the enzyme in this species is believed to be a menaquinone. Couples the redox reaction to proton translocation (for every two electrons transferred, four hydrogen ions are translocated across the cytoplasmic membrane), and thus conserves the redox energy in a proton gradient. The polypeptide is NADH-quinone oxidoreductase subunit B (Mycolicibacterium smegmatis (strain ATCC 700084 / mc(2)155) (Mycobacterium smegmatis)).